Here is a 258-residue protein sequence, read N- to C-terminus: Indole-3-glycerol phosphate synthase (258 aa).

The protein belongs to the TrpC family.

It carries out the reaction 1-(2-carboxyphenylamino)-1-deoxy-D-ribulose 5-phosphate + H(+) = (1S,2R)-1-C-(indol-3-yl)glycerol 3-phosphate + CO2 + H2O. It participates in amino-acid biosynthesis; L-tryptophan biosynthesis; L-tryptophan from chorismate: step 4/5. The sequence is that of Indole-3-glycerol phosphate synthase from Chlorobium phaeobacteroides (strain DSM 266 / SMG 266 / 2430).